Reading from the N-terminus, the 319-residue chain is Sliding-clamp-loader large subunit (319 aa).

ATP is bound by residues 12–15 (EQKY), I24, 53–58 (GTGKTT), and R205.

It belongs to the Tevenvirinae sliding-clamp-loader large subunit family. In terms of assembly, the sliding-clamp-loader consists of 4 large subunits and 1 small subunit. Interacts with the sliding clamp; this interaction allows the sliding-clamp-loader to open the sliding clamp. Part of the replicase complex that includes the DNA polymerase, the polymerase clamp, the clamp loader complex, the single-stranded DNA binding protein, the primase, the helicase and the helicase assembly factor.

In terms of biological role, forms the sliding-clamp-loader together with the small subunit. Functions as an ATPase enzyme. The clamp loader holds the clamp in an open conformation and places it onto the DNA. 4 ATP molecules must bind to the sliding-clamp-loader before the latter can open the sliding clamp. ATP hydrolysis triggers the detachment of the sliding clamp from the sliding-clamp-loader, freeing the sliding clamp to track along DNA. The chain is Sliding-clamp-loader large subunit (44) from Enterobacteria phage T4 (Bacteriophage T4).